The following is a 305-amino-acid chain: Dihydroorotate dehydrogenase B (NAD(+)), catalytic subunit (305 aa).

Residues S23 and 47-48 (KG) each bind FMN. Residues K47 and 71-75 (NAIGL) contribute to the substrate site. Residues N101 and N129 each contribute to the FMN site. Residue N129 participates in substrate binding. The active-site Nucleophile is C132. 2 residues coordinate FMN: K167 and I193. 194–195 (NT) contacts substrate. Residues G219, 245–246 (GG), and 267–268 (GT) each bind FMN.

It belongs to the dihydroorotate dehydrogenase family. Type 1 subfamily. In terms of assembly, heterotetramer of 2 PyrK and 2 PyrD type B subunits. Requires FMN as cofactor.

It localises to the cytoplasm. The catalysed reaction is (S)-dihydroorotate + NAD(+) = orotate + NADH + H(+). It participates in pyrimidine metabolism; UMP biosynthesis via de novo pathway; orotate from (S)-dihydroorotate (NAD(+) route): step 1/1. Functionally, catalyzes the conversion of dihydroorotate to orotate with NAD(+) as electron acceptor. This Citrifermentans bemidjiense (strain ATCC BAA-1014 / DSM 16622 / JCM 12645 / Bem) (Geobacter bemidjiensis) protein is Dihydroorotate dehydrogenase B (NAD(+)), catalytic subunit (pyrD).